A 208-amino-acid chain; its full sequence is Large ribosomal subunit protein uL4 (208 aa).

The segment at 50 to 83 (VKTRAEVSGGGRKPWKQKGTGRARQGSIRAPQWK) is disordered.

The protein belongs to the universal ribosomal protein uL4 family. In terms of assembly, part of the 50S ribosomal subunit.

Functionally, one of the primary rRNA binding proteins, this protein initially binds near the 5'-end of the 23S rRNA. It is important during the early stages of 50S assembly. It makes multiple contacts with different domains of the 23S rRNA in the assembled 50S subunit and ribosome. In terms of biological role, forms part of the polypeptide exit tunnel. In Mycoplasma mycoides subsp. mycoides SC (strain CCUG 32753 / NCTC 10114 / PG1), this protein is Large ribosomal subunit protein uL4.